A 129-amino-acid chain; its full sequence is Cortical cell-delineating protein (129 aa).

A signal peptide (or 21) is located at residues 1–19; the sequence is MAPKVALFLALSLLFAATA. Asparagine 25 carries N-linked (GlcNAc...) asparagine glycosylation. A run of 2 repeats spans residues 29-34 and 35-40. The tract at residues 29–40 is 2 X 6 AA tandem repeats of P-V-V-P-T-P; it reads PVVPTPPVVPTP.

It to carrot DC2.15 and PEMB3. In terms of tissue distribution, cortical ground meristem of developing roots.

Delineates a novel subset of developing cortical cells. It is probably involved in some aspect of transport of molecules to or from the vasculature. In Zea mays (Maize), this protein is Cortical cell-delineating protein.